The chain runs to 506 residues: Glycerol kinase (506 aa).

T11 is an ADP binding site. 3 residues coordinate ATP: T11, S12, and S13. Residue T11 coordinates sn-glycerol 3-phosphate. Residue R15 participates in ADP binding. 4 residues coordinate sn-glycerol 3-phosphate: R81, E82, Y133, and D242. Glycerol is bound by residues R81, E82, Y133, D242, and Q243. T264 and G316 together coordinate ADP. The ATP site is built by T264, G316, Q320, and G421. Residues G421 and N425 each coordinate ADP.

It belongs to the FGGY kinase family.

It catalyses the reaction glycerol + ATP = sn-glycerol 3-phosphate + ADP + H(+). Its pathway is polyol metabolism; glycerol degradation via glycerol kinase pathway; sn-glycerol 3-phosphate from glycerol: step 1/1. With respect to regulation, inhibited by fructose 1,6-bisphosphate (FBP). Functionally, key enzyme in the regulation of glycerol uptake and metabolism. Catalyzes the phosphorylation of glycerol to yield sn-glycerol 3-phosphate. The polypeptide is Glycerol kinase (Paracidovorax citrulli (strain AAC00-1) (Acidovorax citrulli)).